We begin with the raw amino-acid sequence, 75 residues long: Small ribosomal subunit protein bS18 (75 aa).

The protein belongs to the bacterial ribosomal protein bS18 family. As to quaternary structure, part of the 30S ribosomal subunit. Forms a tight heterodimer with protein bS6.

Its function is as follows. Binds as a heterodimer with protein bS6 to the central domain of the 16S rRNA, where it helps stabilize the platform of the 30S subunit. This chain is Small ribosomal subunit protein bS18, found in Shewanella denitrificans (strain OS217 / ATCC BAA-1090 / DSM 15013).